A 162-amino-acid chain; its full sequence is Interleukin-15 (162 aa).

A signal peptide spans 1–29 (MRISKPHLRITSIQCYVCLLLNTHFLTEA). The propeptide occupies 30–48 (GIRVFILGCISAGIPKTEA). Cystine bridges form between Cys83/Cys133 and Cys90/Cys136. Asn119, Asn127, and Asn143 each carry an N-linked (GlcNAc...) asparagine glycan.

It belongs to the IL-15/IL-21 family.

The protein localises to the secreted. Cytokine that plays a major role in the development of inflammatory and protective immune responses to microbial invaders and parasites by modulating immune cells of both the innate and adaptive immune systems. Stimulates the proliferation of natural killer cells, T-cells and B-cells and promotes the secretion of several cytokines. In monocytes, induces the production of IL8 and monocyte chemotactic protein 1/CCL2, two chemokines that attract neutrophils and monocytes respectively to sites of infection. Unlike most cytokines, which are secreted in soluble form, IL15 is expressed in association with its high affinity IL15RA on the surface of IL15-producing cells and delivers signals to target cells that express IL2RB and IL2RG receptor subunits. Binding to its receptor triggers the phosphorylation of JAK1 and JAK3 and the recruitment and subsequent phosphorylation of signal transducer and activator of transcription-3/STAT3 and STAT5. In mast cells, induces the rapid tyrosine phosphorylation of STAT6 and thereby controls mast cell survival and release of cytokines such as IL4. This chain is Interleukin-15 (IL15), found in Marmota himalayana (Himalayan marmot).